The following is a 436-amino-acid chain: Mitochondrial distribution and morphology protein 12 (436 aa).

An SMP-LTD domain is found at 1–436 (MSIEVNWGTA…VFPSFYTFLI (436 aa)). The segment covering 73–84 (DEDGDSGSEISE) has biased composition (acidic residues). 3 disordered regions span residues 73-98 (DEDG…WDRT), 184-275 (AVAG…RMRE), and 352-380 (GSGS…PHQK). Residues 85–98 (ELQHRTHDNPWDRT) are compositionally biased toward basic and acidic residues. 2 stretches are compositionally biased toward polar residues: residues 190–206 (PFTT…QGNK) and 222–243 (DSSN…SNRS). Basic and acidic residues predominate over residues 244 to 255 (SHPDGHPEHNDD). Residues 256–267 (PISSSENPLLQN) show a composition bias toward polar residues.

It belongs to the MDM12 family. As to quaternary structure, component of the ER-mitochondria encounter structure (ERMES) or MDM complex, composed of mmm1, mdm10, mdm12 and mdm34. A mmm1 homodimer associates with one molecule of mdm12 on each side in a pairwise head-to-tail manner, and the SMP-LTD domains of mmm1 and mdm12 generate a continuous hydrophobic tunnel for phospholipid trafficking.

The protein resides in the mitochondrion outer membrane. It is found in the endoplasmic reticulum membrane. Functionally, component of the ERMES/MDM complex, which serves as a molecular tether to connect the endoplasmic reticulum (ER) and mitochondria. Components of this complex are involved in the control of mitochondrial shape and protein biogenesis, and function in nonvesicular lipid trafficking between the ER and mitochondria. Mdm12 is required for the interaction of the ER-resident membrane protein mmm1 and the outer mitochondrial membrane-resident beta-barrel protein mdm10. The mdm12-mmm1 subcomplex functions in the major beta-barrel assembly pathway that is responsible for biogenesis of all mitochondrial outer membrane beta-barrel proteins, and acts in a late step after the SAM complex. The mdm10-mdm12-mmm1 subcomplex further acts in the TOM40-specific pathway after the action of the mdm12-mmm1 complex. Essential for establishing and maintaining the structure of mitochondria and maintenance of mtDNA nucleoids. This is Mitochondrial distribution and morphology protein 12 from Emericella nidulans (strain FGSC A4 / ATCC 38163 / CBS 112.46 / NRRL 194 / M139) (Aspergillus nidulans).